Reading from the N-terminus, the 486-residue chain is Probable transporter MCH1 (486 aa).

The next 12 helical transmembrane spans lie at 31–51 (IFAL…FSMY), 68–88 (SVSI…GYLG), 95–115 (YLAL…SGIF), 135–155 (EMAL…YASL), 174–194 (TYTP…SSLW), 211–231 (VAGI…IIFF), 268–288 (FFTD…GGPF), 312–333 (FSTH…VGFS), 349–369 (VIAL…FTVF), 377–397 (VVTI…PTIV), 409–429 (IWGS…LLFA), and 457–477 (FVIT…IWVF).

It belongs to the major facilitator superfamily.

The protein localises to the vacuole membrane. Probable transporter. The protein is Probable transporter MCH1 (MCH1) of Yarrowia lipolytica (strain CLIB 122 / E 150) (Yeast).